The following is a 625-amino-acid chain: Chaperone protein DnaK (625 aa).

At Thr197 the chain carries Phosphothreonine; by autocatalysis. A disordered region spans residues 598–625 (MYKKDDNASGEQSGGKKKDDDVIDAEVE).

Belongs to the heat shock protein 70 family.

Acts as a chaperone. This chain is Chaperone protein DnaK, found in Campylobacter curvus (strain 525.92).